We begin with the raw amino-acid sequence, 185 residues long: Ribosome-recycling factor (185 aa).

The protein belongs to the RRF family.

The protein localises to the cytoplasm. Its function is as follows. Responsible for the release of ribosomes from messenger RNA at the termination of protein biosynthesis. May increase the efficiency of translation by recycling ribosomes from one round of translation to another. The protein is Ribosome-recycling factor of Clostridium novyi (strain NT).